Consider the following 278-residue polypeptide: Serine protease 57 (278 aa).

Positions 1 to 31 (MVPGTGGGRDCLTLVVATALTQLLWLPGCCG) are cleaved as a signal peptide. The Peptidase S1 domain maps to 34-263 (IVGGHEVKPH…FVSWIWDVVR (230 aa)). A disulfide bridge connects residues cysteine 59 and cysteine 75. Catalysis depends on charge relay system residues histidine 74 and aspartate 122. Residue asparagine 129 is glycosylated (N-linked (GlcNAc...) asparagine). 3 cysteine pairs are disulfide-bonded: cysteine 157/cysteine 224, cysteine 188/cysteine 202, and cysteine 214/cysteine 239. The Charge relay system role is filled by serine 218.

The protein belongs to the peptidase S1 family. In terms of processing, after cleavage of the signal peptide, the N-terminus is probably further processed by CTSC. Processing by CTSC is probably required for accumulation in cytoplasmic granules; in the absence of CTSC the protein does not accumulate. Post-translationally, N-glycosylated.

It localises to the cytoplasmic granule lumen. It is found in the secreted. Serine protease that cleaves preferentially after Arg residues. Can also cleave after citrulline (deimidated arginine) and methylarginine residues. This Rattus norvegicus (Rat) protein is Serine protease 57 (Prss57).